A 155-amino-acid polypeptide reads, in one-letter code: Large ribosomal subunit protein uL22c (155 aa).

This sequence belongs to the universal ribosomal protein uL22 family. In terms of assembly, part of the 50S ribosomal subunit.

It is found in the plastid. It localises to the chloroplast. This protein binds specifically to 23S rRNA. Functionally, the globular domain of the protein is located near the polypeptide exit tunnel on the outside of the subunit, while an extended beta-hairpin is found that lines the wall of the exit tunnel in the center of the 70S ribosome. This Nicotiana sylvestris (Wood tobacco) protein is Large ribosomal subunit protein uL22c (rpl22).